The sequence spans 333 residues: Atrochrysone carboxyl ACP thioesterase MYCFIDRAFT_190111 (333 aa).

Zn(2+)-binding residues include His-108, His-110, Asp-112, and His-113. Catalysis depends on Asp-112, which acts as the Proton donor/acceptor.

This sequence belongs to the metallo-beta-lactamase superfamily. The cofactor is Zn(2+).

It carries out the reaction atrochrysone carboxyl-[ACP] + H2O = atrochrysone carboxylate + holo-[ACP] + H(+). It participates in secondary metabolite biosynthesis. Atrochrysone carboxyl ACP thioesterase; part of the gene cluster that mediates the biosynthesis of an emodin derivative that may be involved in black Sigatoka disease of banana. The pathway begins with the synthesis of atrochrysone thioester by the polyketide synthase PKS8-1. The atrochrysone carboxyl ACP thioesterase MYCFIDRAFT_190111 then breaks the thioester bond and releases the atrochrysone carboxylic acid from PKS8-1. The decarboxylase MYCFIDRAFT_34057 then catalyzes the concerted decarboxylation-elimination required to convert atochrysone carboxylic acid into emodin anthrone, which is further oxidized to emodin by the anthrone oxygenase MYCFIDRAFT_34418. The functions of the other tailoring enzymes as well as the final product of the cluster have still to be identified. This chain is Atrochrysone carboxyl ACP thioesterase MYCFIDRAFT_190111, found in Pseudocercospora fijiensis (strain CIRAD86) (Black leaf streak disease fungus).